The chain runs to 195 residues: Large ribosomal subunit protein uL18 (195 aa).

The protein belongs to the universal ribosomal protein uL18 family. Part of the 50S ribosomal subunit. Contacts the 5S and 23S rRNAs.

Its function is as follows. This is one of the proteins that bind and probably mediate the attachment of the 5S RNA into the large ribosomal subunit, where it forms part of the central protuberance. This Nanoarchaeum equitans (strain Kin4-M) protein is Large ribosomal subunit protein uL18.